The chain runs to 257 residues: UPF0246 protein HAPS_0280 (257 aa).

It belongs to the UPF0246 family.

This chain is UPF0246 protein HAPS_0280, found in Glaesserella parasuis serovar 5 (strain SH0165) (Haemophilus parasuis).